Consider the following 231-residue polypeptide: Large ribosomal subunit protein uL1 (231 aa).

The protein belongs to the universal ribosomal protein uL1 family. In terms of assembly, part of the 50S ribosomal subunit.

In terms of biological role, binds directly to 23S rRNA. The L1 stalk is quite mobile in the ribosome, and is involved in E site tRNA release. Protein L1 is also a translational repressor protein, it controls the translation of the L11 operon by binding to its mRNA. The polypeptide is Large ribosomal subunit protein uL1 (Azotobacter vinelandii (strain DJ / ATCC BAA-1303)).